Here is a 455-residue protein sequence, read N- to C-terminus: MSLATDCPSSLASASERPLLSQVQLARAAAQHTATLPTAIKNAALEAMATALLEHQEPILAANRADLERAAEMVKAGELSASAYARLKLDAHKLADMVAGVRQVIRLGDPVGRALLIRELDEGLILERRTYPLGVLGVIFESRPDALVQIAALAVKTGNSVLLKGGSEALLSCQALMAAIQAGLQQIPEFPQGSLQLLTSRAEVKALLQLEGLVDLIIPRGSSSFVRYILENTRIPVLGHADGLCHLYVDRAADVDMAIKLTVDSKTQYPAACNAIETLLVHKAIAPHFLPLAVKALREKGVELRGDPLCRELVPDLIPATEDDWSTEYADLILSIKVVGSLDEAIAHIQQYGSRHTEAIVTEDAAAARRFLDEVDAAGVFHNASTRFADGFRYGFGAEVGISTQKLPPRGPVGLEGLVTYRYQLRGQGHLVADYTGPQARPFQHRDRLNNTGLA.

It belongs to the gamma-glutamyl phosphate reductase family.

It is found in the cytoplasm. The catalysed reaction is L-glutamate 5-semialdehyde + phosphate + NADP(+) = L-glutamyl 5-phosphate + NADPH + H(+). It functions in the pathway amino-acid biosynthesis; L-proline biosynthesis; L-glutamate 5-semialdehyde from L-glutamate: step 2/2. Its function is as follows. Catalyzes the NADPH-dependent reduction of L-glutamate 5-phosphate into L-glutamate 5-semialdehyde and phosphate. The product spontaneously undergoes cyclization to form 1-pyrroline-5-carboxylate. This Synechococcus sp. (strain JA-2-3B'a(2-13)) (Cyanobacteria bacterium Yellowstone B-Prime) protein is Gamma-glutamyl phosphate reductase.